Consider the following 163-residue polypeptide: Homoaconitase small subunit (163 aa).

Belongs to the LeuD family. Heterodimer of HacA and HacB.

The catalysed reaction is (2R,3S)-homoisocitrate = cis-homoaconitate + H2O. It functions in the pathway amino-acid biosynthesis; L-lysine biosynthesis via AAA pathway; L-alpha-aminoadipate from 2-oxoglutarate: step 3/5. Is not inhibited by lysine. Its function is as follows. Catalyzes the reversible hydration of cis-homoaconitate ((Z)-but-1-ene-1,2,4-tricarboxylate) to homoisocitrate ((1R,2S)-1-hydroxybutane-1,2,4-tricarboxylate). Can catalyze neither the dehydration of (R)-homocitrate ((2R)-2-hydroxybutane-1,2,4-tricarboxylate) into cis-homoaconitate in vitro, nor the reverse reaction. Is not active toward (S)-homocitrate, cis-aconitate or citrate as substrate. In Thermus thermophilus (strain ATCC BAA-163 / DSM 7039 / HB27), this protein is Homoaconitase small subunit (hacB).